Consider the following 700-residue polypeptide: Elongation factor G (700 aa).

In terms of domain architecture, tr-type G spans 8–290 (ERYRNIGISA…AVIDYLPSPV (283 aa)). Residues 17–24 (AHIDAGKT), 88–92 (DTPGH), and 142–145 (NKMD) each bind GTP.

The protein belongs to the TRAFAC class translation factor GTPase superfamily. Classic translation factor GTPase family. EF-G/EF-2 subfamily.

The protein localises to the cytoplasm. Functionally, catalyzes the GTP-dependent ribosomal translocation step during translation elongation. During this step, the ribosome changes from the pre-translocational (PRE) to the post-translocational (POST) state as the newly formed A-site-bound peptidyl-tRNA and P-site-bound deacylated tRNA move to the P and E sites, respectively. Catalyzes the coordinated movement of the two tRNA molecules, the mRNA and conformational changes in the ribosome. This chain is Elongation factor G, found in Paracidovorax citrulli (strain AAC00-1) (Acidovorax citrulli).